Consider the following 388-residue polypeptide: Xylose isomerase (388 aa).

Catalysis depends on residues histidine 54 and aspartate 57. Mg(2+)-binding residues include glutamate 181, glutamate 217, histidine 220, aspartate 245, aspartate 255, aspartate 257, and aspartate 287.

It belongs to the xylose isomerase family. Homotetramer. Mg(2+) is required as a cofactor.

The protein resides in the cytoplasm. It catalyses the reaction alpha-D-xylose = alpha-D-xylulofuranose. The chain is Xylose isomerase from Streptomyces olivaceoviridis (Streptomyces corchorusii).